The primary structure comprises 89 residues: Defensin-like protein 108 (89 aa).

Positions 1–20 are cleaved as a signal peptide; the sequence is MTSLIAFLFTVLVIVSSVHC. 4 disulfide bridges follow: cysteine 39-cysteine 81, cysteine 49-cysteine 71, cysteine 57-cysteine 79, and cysteine 61-cysteine 80.

It belongs to the DEFL family.

Its subcellular location is the secreted. The sequence is that of Defensin-like protein 108 (LCR51) from Arabidopsis thaliana (Mouse-ear cress).